The chain runs to 71 residues: Putative defensin-like protein 303 (71 aa).

The N-terminal stretch at 1 to 25 (MKSNKATFFLGLLLVYAFCIMLIES) is a signal peptide. Intrachain disulfides connect C27–C45, C33–C50, and C39–C52.

This sequence belongs to the DEFL family.

The protein localises to the secreted. The protein is Putative defensin-like protein 303 of Arabidopsis thaliana (Mouse-ear cress).